The sequence spans 441 residues: MSLITDIIAREVLDSRGNPTLEAEVITELGGFGRGMVPSGASTGEHEAVELRDGDKSRFGGKGTTKAVANVNDVIAKALVGKFDVTDQRAIDQAMIELDGTENKGKLGANAILAVSIAAARAAADELGVPLFSYLGGANSYVLPTPMMNVINGGAHSANKVDFQEFMIMPVGAPTVKEAIRYGAETFHALKKLLEADGKATSVGDEGGFAPDFADNEEPLKYLIRAIEAAGYKPGKDIAIAVDVASSELYDAATKTYKLRWSTGDEFTTPEFIKYLEDLADRYPIISIEDPIDENEWEDWAEITSELGKKVQLVGDDFFVTNTQYLQKGINMGAANSILIKVNQIGTLTETFEAIEMAKEAGYTAIVSHRSGETEDTTISDLVVATNAGQIKTGSLSRTDRIAKYNQLIRIEELLDTTAQYKGIHSFYNLSAAAREAIQAK.

Gln164 contributes to the (2R)-2-phosphoglycerate binding site. Residue Glu206 is the Proton donor of the active site. Mg(2+)-binding residues include Asp243, Glu289, and Asp316. Residues Lys341, Arg370, Ser371, and Lys392 each coordinate (2R)-2-phosphoglycerate. Lys341 acts as the Proton acceptor in catalysis.

It belongs to the enolase family. The cofactor is Mg(2+).

It is found in the cytoplasm. The protein localises to the secreted. Its subcellular location is the cell surface. The enzyme catalyses (2R)-2-phosphoglycerate = phosphoenolpyruvate + H2O. It participates in carbohydrate degradation; glycolysis; pyruvate from D-glyceraldehyde 3-phosphate: step 4/5. Functionally, catalyzes the reversible conversion of 2-phosphoglycerate (2-PG) into phosphoenolpyruvate (PEP). It is essential for the degradation of carbohydrates via glycolysis. This chain is Enolase, found in Leuconostoc citreum (strain KM20).